Consider the following 202-residue polypeptide: Glycerol-3-phosphate acyltransferase (202 aa).

Helical transmembrane passes span 2–22 (MIVIMLILSYLIGAFPSGYVI), 54–74 (FLVTFLDIFKGFIVVFFPLWL), 88–108 (NGLIVGAFAILGHVYPVYLGF), 120–140 (VILGVNPVLLLILAAIFFGIL), 141–161 (YLTKYVSLSSIIASICCVIGA), and 162–182 (LLIRDYILFIVSIGVGVLLII).

This sequence belongs to the PlsY family. Probably interacts with PlsX.

It localises to the cell membrane. It catalyses the reaction an acyl phosphate + sn-glycerol 3-phosphate = a 1-acyl-sn-glycero-3-phosphate + phosphate. The protein operates within lipid metabolism; phospholipid metabolism. In terms of biological role, catalyzes the transfer of an acyl group from acyl-phosphate (acyl-PO(4)) to glycerol-3-phosphate (G3P) to form lysophosphatidic acid (LPA). This enzyme utilizes acyl-phosphate as fatty acyl donor, but not acyl-CoA or acyl-ACP. The chain is Glycerol-3-phosphate acyltransferase from Staphylococcus saprophyticus subsp. saprophyticus (strain ATCC 15305 / DSM 20229 / NCIMB 8711 / NCTC 7292 / S-41).